Reading from the N-terminus, the 153-residue chain is Large ribosomal subunit protein uL30 (153 aa).

This sequence belongs to the universal ribosomal protein uL30 family. Part of the 50S ribosomal subunit.

This Methanoculleus marisnigri (strain ATCC 35101 / DSM 1498 / JR1) protein is Large ribosomal subunit protein uL30.